A 355-amino-acid polypeptide reads, in one-letter code: Protein RecA (355 aa).

Position 67-74 (67-74 (GPESSGKT)) interacts with ATP. A disordered region spans residues 335 to 355 (NSLVSDVESEDEGASESNEEF). Acidic residues predominate over residues 341–355 (VESEDEGASESNEEF).

This sequence belongs to the RecA family.

The protein localises to the cytoplasm. In terms of biological role, can catalyze the hydrolysis of ATP in the presence of single-stranded DNA, the ATP-dependent uptake of single-stranded DNA by duplex DNA, and the ATP-dependent hybridization of homologous single-stranded DNAs. It interacts with LexA causing its activation and leading to its autocatalytic cleavage. The polypeptide is Protein RecA (Sodalis glossinidius).